The sequence spans 372 residues: PqqA peptide cyclase (372 aa).

A Radical SAM core domain is found at 4–220; it reads APPPLSVLLE…ETARRQLGDR (217 aa). Residues C18, C22, and C25 each coordinate [4Fe-4S] cluster.

This sequence belongs to the radical SAM superfamily. PqqE family. Interacts with PqqD. The interaction is necessary for activity of PqqE. [4Fe-4S] cluster is required as a cofactor.

The catalysed reaction is [PQQ precursor protein] + S-adenosyl-L-methionine = E-Y cross-linked-[PQQ precursor protein] + 5'-deoxyadenosine + L-methionine + H(+). The protein operates within cofactor biosynthesis; pyrroloquinoline quinone biosynthesis. Catalyzes the cross-linking of a glutamate residue and a tyrosine residue in the PqqA protein as part of the biosynthesis of pyrroloquinoline quinone (PQQ). This Xanthomonas axonopodis pv. citri (strain 306) protein is PqqA peptide cyclase.